The primary structure comprises 178 residues: Bifunctional protein PyrR (178 aa).

The short motif at 99 to 111 is the PRPP-binding element; sequence VILVDDVLFTGRT.

Belongs to the purine/pyrimidine phosphoribosyltransferase family. PyrR subfamily. As to quaternary structure, homodimer and homohexamer; in equilibrium.

It catalyses the reaction UMP + diphosphate = 5-phospho-alpha-D-ribose 1-diphosphate + uracil. Its function is as follows. Regulates transcriptional attenuation of the pyrimidine nucleotide (pyr) operon by binding in a uridine-dependent manner to specific sites on pyr mRNA. This disrupts an antiterminator hairpin in the RNA and favors formation of a downstream transcription terminator, leading to a reduced expression of downstream genes. In terms of biological role, also displays a weak uracil phosphoribosyltransferase activity which is not physiologically significant. The sequence is that of Bifunctional protein PyrR from Limosilactobacillus reuteri subsp. reuteri (strain JCM 1112) (Lactobacillus reuteri).